The sequence spans 130 residues: UPF0251 protein Mevan_1492 (130 aa).

This sequence belongs to the UPF0251 family.

The chain is UPF0251 protein Mevan_1492 from Methanococcus vannielii (strain ATCC 35089 / DSM 1224 / JCM 13029 / OCM 148 / SB).